The chain runs to 496 residues: Mothers against decapentaplegic homolog 6 (496 aa).

The span at 1-15 (MFRSKRSGLVRRLWR) shows a compositional bias: basic residues. Disordered stretches follow at residues 1 to 116 (MFRS…PGWL) and 136 to 156 (GAPRDASDPLAGAALEPAGGG). A dimethylated arginine; alternate mark is found at Arg-75 and Arg-82. Residues Arg-75 and Arg-82 each carry the omega-N-methylarginine; alternate modification. Positions 148–275 (AALEPAGGGR…FSRLCGPESP (128 aa)) constitute an MH1 domain. Lys-173 is covalently cross-linked (Glycyl lysine isopeptide (Lys-Gly) (interchain with G-Cter in ubiquitin)). Zn(2+) contacts are provided by Cys-205, Cys-247, Cys-260, and His-265. Residues 331–496 (WCSVAYWEHR…WLEILLNNPR (166 aa)) enclose the MH2 domain. At Ser-435 the chain carries Phosphoserine; by PRKX; in vitro.

Belongs to the dwarfin/SMAD family. Interacts with NEDD4L. Interacts with WWP1. Interacts with STAMBP and PRKX. Interacts with RNF111 and AXIN1. Interacts with TGF-beta type I receptor superfamily members, including ACVR1B, BMPR1B and TGFBR1. In response to BMP2, but not to TGFB treatment, interacts with SMAD1, but not with SMAD2, nor with SMAD4; this interaction may inhibit SMAD1 binding to SMAD4. Interacts with HOXC8 and HOXC9. Interacts with PELI1; this interaction interferes with PELI1 complex formation with TRAF6, IRAK1, IRAK4 and MYD88 in response to IL1B and hence negatively regulates IL1R-TLR signaling. Interacts with TSC22D1/TSC-22. Phosphorylated by BMP type 1 receptor kinase and by PRKX. In terms of processing, monoubiquitinated at Lys-173 by the E2/E3 hybrid ubiquitin-protein ligase UBE2O, leading to reduced binding affinity for the activated BMP type I receptor ACVR1/ALK2, thereby enhancing BMP7 and regulating adipocyte differentiation. Ubiquitinated by WWP1. Ubiquitinated by ARK2C, promoting proteasomal degradation, leading to enhance the BMP-Smad signaling. Post-translationally, arginine methylation by PRMT1, which is recruited by BMPR2, initiates BMP-Induced signaling and induces dissociation from the BMPR1B receptor at the cell surface leading to derepress downstream Smad1/Smad5 signaling. In terms of tissue distribution, expressed in the brain, heart, ovary, peripheral blood leukocytes, small intestine, spleen, thymus, bone marrow, fetal liver and lymph nodes.

It localises to the nucleus. Its function is as follows. Transforming growth factor-beta superfamily receptors signaling occurs through the Smad family of intracellular mediators. SMAD6 is an inhibitory Smad (i-Smad) that negatively regulates signaling downstream of type I transforming growth factor-beta. Acts as a mediator of TGF-beta and BMP anti-inflammatory activities. Suppresses IL1R-TLR signaling through its direct interaction with PEL1, preventing NF-kappa-B activation, nuclear transport and NF-kappa-B-mediated expression of pro-inflammatory genes. Blocks the BMP-SMAD1 signaling pathway by competing with SMAD4 for receptor-activated SMAD1-binding. Binds to regulatory elements in target promoter regions. This is Mothers against decapentaplegic homolog 6 (SMAD6) from Homo sapiens (Human).